We begin with the raw amino-acid sequence, 248 residues long: 1-(5-phosphoribosyl)-5-[(5-phosphoribosylamino)methylideneamino] imidazole-4-carboxamide isomerase (248 aa).

The active-site Proton acceptor is Asp-8. Asp-131 (proton donor) is an active-site residue.

The protein belongs to the HisA/HisF family.

It localises to the cytoplasm. The enzyme catalyses 1-(5-phospho-beta-D-ribosyl)-5-[(5-phospho-beta-D-ribosylamino)methylideneamino]imidazole-4-carboxamide = 5-[(5-phospho-1-deoxy-D-ribulos-1-ylimino)methylamino]-1-(5-phospho-beta-D-ribosyl)imidazole-4-carboxamide. Its pathway is amino-acid biosynthesis; L-histidine biosynthesis; L-histidine from 5-phospho-alpha-D-ribose 1-diphosphate: step 4/9. The protein is 1-(5-phosphoribosyl)-5-[(5-phosphoribosylamino)methylideneamino] imidazole-4-carboxamide isomerase of Cupriavidus pinatubonensis (strain JMP 134 / LMG 1197) (Cupriavidus necator (strain JMP 134)).